A 177-amino-acid chain; its full sequence is NAD(P)H-quinone oxidoreductase subunit 6, chloroplastic (177 aa).

The next 5 helical transmembrane spans lie at 10–30, 32–52, 61–81, 92–112, and 152–172; these read IFLV…VLLT, PVYS…FHIP, AQLL…VMFM, LWTV…FSLI, and FYLP…GAIA.

It belongs to the complex I subunit 6 family. As to quaternary structure, NDH is composed of at least 16 different subunits, 5 of which are encoded in the nucleus.

The protein localises to the plastid. Its subcellular location is the chloroplast thylakoid membrane. The catalysed reaction is a plastoquinone + NADH + (n+1) H(+)(in) = a plastoquinol + NAD(+) + n H(+)(out). The enzyme catalyses a plastoquinone + NADPH + (n+1) H(+)(in) = a plastoquinol + NADP(+) + n H(+)(out). NDH shuttles electrons from NAD(P)H:plastoquinone, via FMN and iron-sulfur (Fe-S) centers, to quinones in the photosynthetic chain and possibly in a chloroplast respiratory chain. The immediate electron acceptor for the enzyme in this species is believed to be plastoquinone. Couples the redox reaction to proton translocation, and thus conserves the redox energy in a proton gradient. The polypeptide is NAD(P)H-quinone oxidoreductase subunit 6, chloroplastic (ndhG) (Illicium oligandrum (Star anise)).